The chain runs to 399 residues: S-adenosylmethionine synthase (399 aa).

An ATP-binding site is contributed by H19. D21 is a binding site for Mg(2+). A K(+)-binding site is contributed by E47. Residues E60 and Q103 each coordinate L-methionine. Residues 103–113 (QSPDIAQGVNQ) form a flexible loop region. ATP contacts are provided by residues 179–181 (DGK), 246–247 (RF), D255, 261–262 (RK), A278, and K282. Position 255 (D255) interacts with L-methionine. K286 is a binding site for L-methionine.

Belongs to the AdoMet synthase family. Homotetramer; dimer of dimers. The cofactor is Mg(2+). K(+) serves as cofactor.

The protein localises to the cytoplasm. It carries out the reaction L-methionine + ATP + H2O = S-adenosyl-L-methionine + phosphate + diphosphate. It functions in the pathway amino-acid biosynthesis; S-adenosyl-L-methionine biosynthesis; S-adenosyl-L-methionine from L-methionine: step 1/1. Its function is as follows. Catalyzes the formation of S-adenosylmethionine (AdoMet) from methionine and ATP. The overall synthetic reaction is composed of two sequential steps, AdoMet formation and the subsequent tripolyphosphate hydrolysis which occurs prior to release of AdoMet from the enzyme. The sequence is that of S-adenosylmethionine synthase from Halalkalibacterium halodurans (strain ATCC BAA-125 / DSM 18197 / FERM 7344 / JCM 9153 / C-125) (Bacillus halodurans).